The chain runs to 83 residues: Short neurotoxin B (83 aa).

A signal peptide spans 1–21 (MKTLLLTLVVVTIVCLDLGYT). 4 cysteine pairs are disulfide-bonded: Cys-24-Cys-45, Cys-38-Cys-62, Cys-64-Cys-75, and Cys-76-Cys-81.

It belongs to the three-finger toxin family. Short-chain subfamily. Type I alpha-neurotoxin sub-subfamily. As to expression, expressed by the venom gland.

Its subcellular location is the secreted. Its function is as follows. Binds to muscle nicotinic acetylcholine receptor (nAChR) and inhibit acetylcholine from binding to the receptor, thereby impairing neuromuscular transmission. The chain is Short neurotoxin B from Laticauda laticaudata (Blue-ringed sea krait).